The chain runs to 789 residues: Disintegrin and metalloproteinase domain-containing protein 1 (789 aa).

The N-terminal stretch at 1-68 is a signal peptide; sequence MSVAASASRS…LLIFLPSTLC (68 aa). The Peptidase M12B domain maps to 238 to 432; that stretch reads KYVEMFVVVN…HRGACLLDRP (195 aa). N-linked (GlcNAc...) asparagine glycosylation occurs at N259. 4 cysteine pairs are disulfide-bonded: C348–C427, C388–C411, C390–C396, and C497–C517. A Zn(2+)-binding site is contributed by H373. The active site involves E374. Residues H377 and H383 each coordinate Zn(2+). N410 is a glycosylation site (N-linked (GlcNAc...) asparagine). The region spanning 441 to 525 is the Disintegrin domain; the sequence is DAHCGNGVVE…ECPANSYMQD (85 aa). A glycan (N-linked (GlcNAc...) asparagine) is linked at N633. In terms of domain architecture, EGF-like spans 666-700; that stretch reads LQYDCHPQEMCHGNGVCNNFKHCHCDAGFSPPDCS. Cystine bridges form between C670-C682, C676-C688, and C690-C699. N720 is a glycosylation site (N-linked (GlcNAc...) asparagine). The chain crosses the membrane as a helical span at residues 743–763; it reads VVVLVVPIFLIVLLCCLMLIA. Residues 764–789 lie on the Cytoplasmic side of the membrane; the sequence is YLWSEVQEAVSPGSSSTTSSSESESD.

Heterodimer with ADAM2/fertilin subunit beta.

Its subcellular location is the membrane. Its function is as follows. May be involved in sperm-egg fusion. This is Disintegrin and metalloproteinase domain-containing protein 1 (Adam1) from Rattus norvegicus (Rat).